Here is a 187-residue protein sequence, read N- to C-terminus: Flavin prenyltransferase UbiX (187 aa).

FMN contacts are provided by residues 9 to 11 (GSS), threonine 34, 88 to 91 (SISS), and arginine 123. Dimethylallyl phosphate-binding residues include tyrosine 153 and lysine 169.

The protein belongs to the UbiX/PAD1 family.

The enzyme catalyses dimethylallyl phosphate + FMNH2 = prenylated FMNH2 + phosphate. Flavin prenyltransferase that catalyzes the synthesis of the prenylated FMN cofactor (prenyl-FMN) for 4-hydroxy-3-polyprenylbenzoic acid decarboxylase UbiD. The prenyltransferase is metal-independent and links a dimethylallyl moiety from dimethylallyl monophosphate (DMAP) to the flavin N5 and C6 atoms of FMN. This chain is Flavin prenyltransferase UbiX, found in Campylobacter jejuni subsp. jejuni serotype O:2 (strain ATCC 700819 / NCTC 11168).